Here is a 245-residue protein sequence, read N- to C-terminus: tRNA1(Val) (adenine(37)-N6)-methyltransferase (245 aa).

It belongs to the methyltransferase superfamily. tRNA (adenine-N(6)-)-methyltransferase family.

The protein localises to the cytoplasm. The enzyme catalyses adenosine(37) in tRNA1(Val) + S-adenosyl-L-methionine = N(6)-methyladenosine(37) in tRNA1(Val) + S-adenosyl-L-homocysteine + H(+). Specifically methylates the adenine in position 37 of tRNA(1)(Val) (anticodon cmo5UAC). This chain is tRNA1(Val) (adenine(37)-N6)-methyltransferase, found in Salmonella enteritidis PT4 (strain P125109).